The sequence spans 392 residues: Casein kinase II subunit alpha (392 aa).

The Protein kinase domain occupies 39–324 (YQLVRKLGRG…AREAMDHPYF (286 aa)). Residues 45–53 (LGRGKYSEV) and K68 contribute to the ATP site. D156 serves as the catalytic Proton acceptor. Positions 334 to 355 (MGGSNMPSGSSTPVSSASMMSG) are disordered. A compositionally biased stretch (low complexity) spans 337 to 354 (SNMPSGSSTPVSSASMMS).

Belongs to the protein kinase superfamily. Ser/Thr protein kinase family. CK2 subfamily. Tetramer composed of an alpha chain, an alpha' and two beta chains.

The protein localises to the nucleus. It carries out the reaction L-seryl-[protein] + ATP = O-phospho-L-seryl-[protein] + ADP + H(+). The catalysed reaction is L-threonyl-[protein] + ATP = O-phospho-L-threonyl-[protein] + ADP + H(+). Its function is as follows. Catalytic subunit of a constitutively active serine/threonine-protein kinase complex that phosphorylates a large number of substrates containing acidic residues C-terminal to the phosphorylated serine or threonine. Regulates numerous cellular processes, such as cell cycle progression, apoptosis and transcription, as well as viral infection. May act as a regulatory node which integrates and coordinates numerous signals leading to an appropriate cellular response. During mitosis, functions as a component of the p53/TP53-dependent spindle assembly checkpoint (SAC) that maintains cyclin-B-CDK1 activity and G2 arrest in response to spindle damage. Can also negatively regulate apoptosis. Phosphorylates the caspases CASP9 and CASP2 and the apoptotic regulator NOL3. Phosphorylation protects CASP9 from cleavage and activation by CASP8, and inhibits the dimerization of CASP2 and activation of CASP8. Plays an important role in the circadian clock function by phosphorylating BMAL1. This is Casein kinase II subunit alpha (csnk2a1) from Xenopus laevis (African clawed frog).